Consider the following 373-residue polypeptide: Dual-specificity RNA methyltransferase RlmN (373 aa).

E94 serves as the catalytic Proton acceptor. The Radical SAM core domain maps to 100–339; sequence EEDRATLCVS…VIVRKTRGDD (240 aa). C107 and C344 are disulfide-bonded. Residues C114, C118, and C121 each coordinate [4Fe-4S] cluster. S-adenosyl-L-methionine is bound by residues 168 to 169, S200, 222 to 224, and N301; these read GE and SIH. C344 functions as the S-methylcysteine intermediate in the catalytic mechanism.

The protein belongs to the radical SAM superfamily. RlmN family. [4Fe-4S] cluster is required as a cofactor.

Its subcellular location is the cytoplasm. The enzyme catalyses adenosine(2503) in 23S rRNA + 2 reduced [2Fe-2S]-[ferredoxin] + 2 S-adenosyl-L-methionine = 2-methyladenosine(2503) in 23S rRNA + 5'-deoxyadenosine + L-methionine + 2 oxidized [2Fe-2S]-[ferredoxin] + S-adenosyl-L-homocysteine. It catalyses the reaction adenosine(37) in tRNA + 2 reduced [2Fe-2S]-[ferredoxin] + 2 S-adenosyl-L-methionine = 2-methyladenosine(37) in tRNA + 5'-deoxyadenosine + L-methionine + 2 oxidized [2Fe-2S]-[ferredoxin] + S-adenosyl-L-homocysteine. In terms of biological role, specifically methylates position 2 of adenine 2503 in 23S rRNA and position 2 of adenine 37 in tRNAs. m2A2503 modification seems to play a crucial role in the proofreading step occurring at the peptidyl transferase center and thus would serve to optimize ribosomal fidelity. The chain is Dual-specificity RNA methyltransferase RlmN from Shewanella frigidimarina (strain NCIMB 400).